The primary structure comprises 607 residues: UvrABC system protein C (607 aa).

The GIY-YIG domain occupies 16–94 (GRPGVYRMFD…IKEWRPPYNI (79 aa)). The region spanning 203–238 (NALSDELNASMEKAAMALDFERAAELRDQVALLRRV) is the UVR domain.

This sequence belongs to the UvrC family. Interacts with UvrB in an incision complex.

It localises to the cytoplasm. In terms of biological role, the UvrABC repair system catalyzes the recognition and processing of DNA lesions. UvrC both incises the 5' and 3' sides of the lesion. The N-terminal half is responsible for the 3' incision and the C-terminal half is responsible for the 5' incision. The polypeptide is UvrABC system protein C (Pseudomonas syringae pv. tomato (strain ATCC BAA-871 / DC3000)).